Reading from the N-terminus, the 238-residue chain is Uridylate kinase (238 aa).

12–15 (KLSG) lines the ATP pocket. UMP is bound at residue G54. Residues G55 and R59 each contribute to the ATP site. Residues D74 and 135-142 (TGNPYFTT) each bind UMP. Positions 162, 163, 168, and 171 each coordinate ATP.

Belongs to the UMP kinase family. In terms of assembly, homohexamer.

It is found in the cytoplasm. The catalysed reaction is UMP + ATP = UDP + ADP. The protein operates within pyrimidine metabolism; CTP biosynthesis via de novo pathway; UDP from UMP (UMPK route): step 1/1. Its activity is regulated as follows. Inhibited by UTP. Its function is as follows. Catalyzes the reversible phosphorylation of UMP to UDP. The polypeptide is Uridylate kinase (Rhodopseudomonas palustris (strain ATCC BAA-98 / CGA009)).